A 713-amino-acid chain; its full sequence is tRNA 5-methylaminomethyl-2-thiouridine biosynthesis bifunctional protein MnmC (713 aa).

Residues 1–300 are tRNA (mnm(5)s(2)U34)-methyltransferase; that stretch reads MTAEPNKPCQ…MAAILSSATP (300 aa). The FAD-dependent cmnm(5)s(2)U34 oxidoreductase stretch occupies residues 306 to 713; the sequence is IGGGLASAHL…LRKLLKGKAL (408 aa).

In the N-terminal section; belongs to the methyltransferase superfamily. tRNA (mnm(5)s(2)U34)-methyltransferase family. The protein in the C-terminal section; belongs to the DAO family. FAD serves as cofactor.

It is found in the cytoplasm. The catalysed reaction is 5-aminomethyl-2-thiouridine(34) in tRNA + S-adenosyl-L-methionine = 5-methylaminomethyl-2-thiouridine(34) in tRNA + S-adenosyl-L-homocysteine + H(+). Functionally, catalyzes the last two steps in the biosynthesis of 5-methylaminomethyl-2-thiouridine (mnm(5)s(2)U) at the wobble position (U34) in tRNA. Catalyzes the FAD-dependent demodification of cmnm(5)s(2)U34 to nm(5)s(2)U34, followed by the transfer of a methyl group from S-adenosyl-L-methionine to nm(5)s(2)U34, to form mnm(5)s(2)U34. In Shewanella baltica (strain OS155 / ATCC BAA-1091), this protein is tRNA 5-methylaminomethyl-2-thiouridine biosynthesis bifunctional protein MnmC.